A 260-amino-acid chain; its full sequence is Triosephosphate isomerase (260 aa).

A substrate-binding site is contributed by 11–13 (NWK). H103 functions as the Electrophile in the catalytic mechanism. The Proton acceptor role is filled by E175. Substrate-binding positions include G181, S220, and 241–242 (GG).

Belongs to the triosephosphate isomerase family. Homodimer.

Its subcellular location is the cytoplasm. The enzyme catalyses D-glyceraldehyde 3-phosphate = dihydroxyacetone phosphate. It participates in carbohydrate biosynthesis; gluconeogenesis. It functions in the pathway carbohydrate degradation; glycolysis; D-glyceraldehyde 3-phosphate from glycerone phosphate: step 1/1. Involved in the gluconeogenesis. Catalyzes stereospecifically the conversion of dihydroxyacetone phosphate (DHAP) to D-glyceraldehyde-3-phosphate (G3P). In Shewanella piezotolerans (strain WP3 / JCM 13877), this protein is Triosephosphate isomerase.